The primary structure comprises 104 residues: MESFTRAELVAQRDGVWAVCGEVFEAYEKCRMEKGSDPELCLRESTAVVGCSQKVMREIVKNCQKELNESVKCIEENNMRTIPCEEENKAFNECFDKLVAPKFL.

CHCH domains follow at residues 17–59 and 60–102; these read WAVC…MREI and VKNC…VAPK. Short sequence motifs (cx9C motif) lie at residues 20–30, 41–51, 63–73, and 84–94; these read CGEVFEAYEKC, CLRESTAVVGC, CQKELNESVKC, and CEEENKAFNEC. Disulfide bonds link Cys-20–Cys-51, Cys-30–Cys-41, Cys-63–Cys-94, and Cys-73–Cys-84.

The protein belongs to the complex I NDUFA8 subunit family. Complex I is composed of about 45 different subunits.

The protein localises to the mitochondrion inner membrane. It is found in the mitochondrion intermembrane space. Its function is as follows. Accessory subunit of the mitochondrial membrane respiratory chain NADH dehydrogenase (Complex I), that is believed not to be involved in catalysis. Complex I functions in the transfer of electrons from NADH to the respiratory chain. The immediate electron acceptor for the enzyme is believed to be ubiquinone. In Dictyostelium discoideum (Social amoeba), this protein is NADH dehydrogenase [ubiquinone] 1 alpha subcomplex subunit 8 (ndufa8).